Consider the following 79-residue polypeptide: Protein VdcD (79 aa).

Involved in the non-oxidative decarboxylation and detoxification of phenolic derivatives under both aerobic and anaerobic conditions, however the precise biochemical function of VdcD in metabolism of phenolic acid is unknown. This Streptomyces sp. (strain D7) protein is Protein VdcD.